Reading from the N-terminus, the 136-residue chain is Early E3 15.3 kDa protein (136 aa).

This sequence belongs to the adenoviridae E3_15 family.

Protects virus-infected cells from TNF-induced cytolysis. The chain is Early E3 15.3 kDa protein from Human adenovirus B serotype 3 (HAdV-3).